The following is a 142-amino-acid chain: Large ribosomal subunit protein uL16 (142 aa).

Belongs to the universal ribosomal protein uL16 family. Part of the 50S ribosomal subunit.

Its function is as follows. Binds 23S rRNA and is also seen to make contacts with the A and possibly P site tRNAs. The polypeptide is Large ribosomal subunit protein uL16 (Thermotoga neapolitana (strain ATCC 49049 / DSM 4359 / NBRC 107923 / NS-E)).